The following is a 524-amino-acid chain: Probable pectinesterase/pectinesterase inhibitor 19 (524 aa).

Residues 1–22 (MLVKVFSFFILMITMVVIGVSK) form the signal peptide. Positions 23–172 (EYCDDKQSCQ…ISRARIALAL (150 aa)) are pectinesterase inhibitor 19. A pectinesterase 19 region spans residues 215-510 (DVVVAKDGTG…FTVAKLLDGE (296 aa)). 2 N-linked (GlcNAc...) asparagine glycosylation sites follow: Asn-265 and Asn-281. Residue Thr-290 participates in substrate binding. Asp-343 functions as the Proton donor; for pectinesterase activity in the catalytic mechanism. A disulfide bond links Cys-357 and Cys-377. Residue Asp-364 is the Nucleophile; for pectinesterase activity of the active site. Asn-412 carries N-linked (GlcNAc...) asparagine glycosylation. 2 residues coordinate substrate: Arg-430 and Trp-432.

In the N-terminal section; belongs to the PMEI family. This sequence in the C-terminal section; belongs to the pectinesterase family. Expressed in siliques, but not in flower buds.

It localises to the secreted. The protein resides in the cell wall. The enzyme catalyses [(1-&gt;4)-alpha-D-galacturonosyl methyl ester](n) + n H2O = [(1-&gt;4)-alpha-D-galacturonosyl](n) + n methanol + n H(+). The protein operates within glycan metabolism; pectin degradation; 2-dehydro-3-deoxy-D-gluconate from pectin: step 1/5. Functionally, acts in the modification of cell walls via demethylesterification of cell wall pectin. The protein is Probable pectinesterase/pectinesterase inhibitor 19 (PME19) of Arabidopsis thaliana (Mouse-ear cress).